A 2153-amino-acid chain; its full sequence is RNA-directed RNA polymerase L (2153 aa).

5 residues coordinate Mn(2+): histidine 36, glutamate 54, aspartate 97, glutamate 110, and valine 111. The active-site For endonuclease activity is the lysine 124. The RdRp catalytic domain occupies threonine 957–methionine 1143. A Mg(2+)-binding site is contributed by aspartate 1100.

Belongs to the Bunyavirales RNA polymerase family. In terms of assembly, interacts with the viral nucleoprotein. Mn(2+) serves as cofactor. The cofactor is Mg(2+).

The protein resides in the host cytoplasm. It localises to the host perinuclear region. It carries out the reaction RNA(n) + a ribonucleoside 5'-triphosphate = RNA(n+1) + diphosphate. In terms of biological role, RNA-dependent RNA polymerase, which is responsible for the replication and transcription of the viral RNA genome using antigenomic RNA as an intermediate. During transcription, synthesizes subgenomic RNAs and assures their capping by a cap-snatching mechanism, which involves the endonuclease activity cleaving the host capped pre-mRNAs. These short capped RNAs are then used as primers for viral transcription. Cleaves ssRNA substrates but not DNA. Seems to downregulate the expression of its own and heterologous mRNAs through its endonuclease activity. This Abrothrix longipilis (Long-haired grass mouse) protein is RNA-directed RNA polymerase L.